Reading from the N-terminus, the 438-residue chain is MALRGVSVQLLSRVPGLRVFRTWVSSAAQTEKVGRTQSQLAKSSRPEFDWRDPLVLEEQLTTDEILIRDTFRTYCQERLMPRILLANRNEVFHREIISQMGELGVLGPTIKGYGCAGVSSVAYGLLARELERVDSGYRSAMSVQSPLVMHPIYAYGSEEQRQKYLPRLAKGELLGCFGLTEPNSGSDPSSMETRARYNSSNKSYTLNGTKTWITNSPMADLFVVWARCEDGRIRGFLLEKGMRGLSAPRIQGKFSLRASATGMIIMDGVEVPEENMLPGASSLGGSFGCLNNGRYGIAWGVLGASEFCLHTARQYALDRMQFGVPLARNQLIQKKLADMLTEITLGLHACLQLGRLKDQDKAAPEMVSLLKRNNCGKALDIARQARDMLGGNGISDEYHVIRHAMNLEAVNTYEGTHDIHALILGRAITGIQAFTASK.

Residues methionine 1–serine 44 constitute a mitochondrion transit peptide. Residues arginine 138 to serine 139 and serine 186 contribute to the substrate site. Residues phenylalanine 177–serine 186, serine 186, and tryptophan 212–threonine 214 each bind FAD. Lysine 240 bears the N6-acetyllysine mark. Residue phenylalanine 287 to arginine 294 participates in substrate binding. FAD is bound by residues arginine 319, glutamine 330, and aspartate 387–glycine 391. Residue glutamate 414 is the Proton acceptor of the active site. Position 415 (glycine 415) interacts with substrate. Residues threonine 416, threonine 416–aspartate 418, and phenylalanine 434 contribute to the FAD site.

This sequence belongs to the acyl-CoA dehydrogenase family. Homotetramer. FAD is required as a cofactor.

It localises to the mitochondrion matrix. It carries out the reaction glutaryl-CoA + oxidized [electron-transfer flavoprotein] + 2 H(+) = (2E)-butenoyl-CoA + reduced [electron-transfer flavoprotein] + CO2. It participates in amino-acid metabolism; lysine degradation. It functions in the pathway amino-acid metabolism; tryptophan metabolism. Functionally, catalyzes the oxidative decarboxylation of glutaryl-CoA to crotonyl-CoA and CO(2) in the degradative pathway of L-lysine, L-hydroxylysine, and L-tryptophan metabolism. It uses electron transfer flavoprotein as its electron acceptor. In Macaca fascicularis (Crab-eating macaque), this protein is Glutaryl-CoA dehydrogenase, mitochondrial (GCDH).